The sequence spans 325 residues: Peroxidase 1 (325 aa).

A signal peptide spans 1-21 (MAIKNILALVVLLSVVGVSVA). 4 disulfides stabilise this stretch: cysteine 35-cysteine 113, cysteine 68-cysteine 73, cysteine 119-cysteine 321, and cysteine 198-cysteine 230. Catalysis depends on histidine 66, which acts as the Proton acceptor. Positions 67, 70, 72, 74, and 76 each coordinate Ca(2+). Proline 161 provides a ligand contact to substrate. A heme b-binding site is contributed by histidine 191. Threonine 192 contacts Ca(2+). Residue asparagine 207 is glycosylated (N-linked (GlcNAc...) asparagine). Aspartate 242, serine 245, and aspartate 250 together coordinate Ca(2+).

The protein belongs to the peroxidase family. Classical plant (class III) peroxidase subfamily. Heme b serves as cofactor. It depends on Ca(2+) as a cofactor. In terms of tissue distribution, slightly expressed in roots.

It localises to the secreted. It carries out the reaction 2 a phenolic donor + H2O2 = 2 a phenolic radical donor + 2 H2O. In terms of biological role, removal of H(2)O(2), oxidation of toxic reductants, biosynthesis and degradation of lignin, suberization, auxin catabolism, response to environmental stresses such as wounding, pathogen attack and oxidative stress. These functions might be dependent on each isozyme/isoform in each plant tissue. This Arabidopsis thaliana (Mouse-ear cress) protein is Peroxidase 1 (PER1).